The primary structure comprises 860 residues: DNA mismatch repair protein MutS (860 aa).

607-614 is an ATP binding site; it reads GPNMSGKS.

The protein belongs to the DNA mismatch repair MutS family.

This protein is involved in the repair of mismatches in DNA. It is possible that it carries out the mismatch recognition step. This protein has a weak ATPase activity. This Listeria monocytogenes serotype 4a (strain HCC23) protein is DNA mismatch repair protein MutS.